The sequence spans 166 residues: Small ribosomal subunit protein uS3m (166 aa).

A mitochondrion-targeting transit peptide spans 1–25; it reads MLRSLQHVESHINQCRRISTTSTLL.

The protein belongs to the universal ribosomal protein uS3 family. Component of the mitochondrial ribosome small subunit (28S) which comprises a 12S rRNA and about 30 distinct proteins.

It is found in the mitochondrion. The chain is Small ribosomal subunit protein uS3m (mrps-24) from Caenorhabditis briggsae.